We begin with the raw amino-acid sequence, 1235 residues long: DNA polymerase catalytic subunit (1235 aa).

Disordered regions lie at residues 640 to 693 (QGRF…AGRH) and 1098 to 1134 (AAAP…ASKP). Positions 650–661 (APKRPAAAREDE) are enriched in basic and acidic residues. The segment covering 662-675 (ERPEEEGEDEDERE) has biased composition (acidic residues). A compositionally biased stretch (basic and acidic residues) spans 676-691 (EGGGEREPEGARETAG).

Belongs to the DNA polymerase type-B family. Forms a complex with the ssDNA-binding protein UL29, the DNA polymerase processivity factor, and the alkaline exonuclease. Interacts with the putative helicase-primase complex subunit UL8; this interaction may coordinate leading and lagging strand DNA synthesis at the replication fork.

Its subcellular location is the host nucleus. The catalysed reaction is DNA(n) + a 2'-deoxyribonucleoside 5'-triphosphate = DNA(n+1) + diphosphate. It catalyses the reaction Endonucleolytic cleavage to 5'-phosphomonoester.. Its function is as follows. Replicates viral genomic DNA. The replication complex is composed of six viral proteins: the DNA polymerase, processivity factor, primase, primase-associated factor, helicase, and ssDNA-binding protein. Additionally, the polymerase contains an intrinsic ribonuclease H (RNase H) activity that specifically degrades RNA/DNA heteroduplexes or duplex DNA substrates in the 5' to 3' direction. Therefore, it can catalyze the excision of the RNA primers that initiate the synthesis of Okazaki fragments at a replication fork during viral DNA replication. In Human herpesvirus 1 (strain KOS) (HHV-1), this protein is DNA polymerase catalytic subunit.